We begin with the raw amino-acid sequence, 915 residues long: Probable inorganic carbon transporter subunit DabA (915 aa).

Positions 392, 394, 566, and 581 each coordinate Zn(2+).

It belongs to the inorganic carbon transporter (TC 9.A.2) DabA family. As to quaternary structure, forms a complex with DabB. Zn(2+) serves as cofactor.

The protein localises to the cell inner membrane. Functionally, part of an energy-coupled inorganic carbon pump. The protein is Probable inorganic carbon transporter subunit DabA of Nitrosospira multiformis (strain ATCC 25196 / NCIMB 11849 / C 71).